The chain runs to 337 residues: tRNA N6-adenosine threonylcarbamoyltransferase (337 aa).

Fe cation-binding residues include His111 and His115. Substrate is bound by residues 134–138, Asp167, Gly180, and Asn272; that span reads LVSGG. Asp300 is a binding site for Fe cation.

This sequence belongs to the KAE1 / TsaD family. The cofactor is Fe(2+).

It is found in the cytoplasm. The enzyme catalyses L-threonylcarbamoyladenylate + adenosine(37) in tRNA = N(6)-L-threonylcarbamoyladenosine(37) in tRNA + AMP + H(+). In terms of biological role, required for the formation of a threonylcarbamoyl group on adenosine at position 37 (t(6)A37) in tRNAs that read codons beginning with adenine. Is involved in the transfer of the threonylcarbamoyl moiety of threonylcarbamoyl-AMP (TC-AMP) to the N6 group of A37, together with TsaE and TsaB. TsaD likely plays a direct catalytic role in this reaction. This Yersinia pseudotuberculosis serotype I (strain IP32953) protein is tRNA N6-adenosine threonylcarbamoyltransferase.